The primary structure comprises 224 residues: Oocyte zinc finger protein XlCOF6.1 (224 aa).

C2H2-type zinc fingers lie at residues 6–28, 34–56, 62–84, 90–112, 118–140, 146–168, 174–196, and 202–224; these read FSCS…CRSH, FHCT…QRYH, FTCF…IRMH, FSCS…QKIH, FSCS…YRTH, FPCP…RRTH, FACS…RLGH, and FSCS…LKSH.

This sequence belongs to the krueppel C2H2-type zinc-finger protein family.

The protein resides in the nucleus. Its function is as follows. May be involved in transcriptional regulation. This chain is Oocyte zinc finger protein XlCOF6.1, found in Xenopus laevis (African clawed frog).